We begin with the raw amino-acid sequence, 318 residues long: Acetyl-coenzyme A carboxylase carboxyl transferase subunit alpha (318 aa).

One can recognise a CoA carboxyltransferase C-terminal domain in the interval 32–293; it reads NLSDELERLR…KERLVSQLDR (262 aa).

It belongs to the AccA family. Acetyl-CoA carboxylase is a heterohexamer composed of biotin carboxyl carrier protein (AccB), biotin carboxylase (AccC) and two subunits each of ACCase subunit alpha (AccA) and ACCase subunit beta (AccD).

It localises to the cytoplasm. The enzyme catalyses N(6)-carboxybiotinyl-L-lysyl-[protein] + acetyl-CoA = N(6)-biotinyl-L-lysyl-[protein] + malonyl-CoA. The protein operates within lipid metabolism; malonyl-CoA biosynthesis; malonyl-CoA from acetyl-CoA: step 1/1. Functionally, component of the acetyl coenzyme A carboxylase (ACC) complex. First, biotin carboxylase catalyzes the carboxylation of biotin on its carrier protein (BCCP) and then the CO(2) group is transferred by the carboxyltransferase to acetyl-CoA to form malonyl-CoA. The protein is Acetyl-coenzyme A carboxylase carboxyl transferase subunit alpha of Saccharophagus degradans (strain 2-40 / ATCC 43961 / DSM 17024).